Consider the following 103-residue polypeptide: Large ribosomal subunit protein bL21 (103 aa).

This sequence belongs to the bacterial ribosomal protein bL21 family. As to quaternary structure, part of the 50S ribosomal subunit. Contacts protein L20.

Functionally, this protein binds to 23S rRNA in the presence of protein L20. In Haemophilus influenzae (strain PittEE), this protein is Large ribosomal subunit protein bL21.